Consider the following 339-residue polypeptide: DNA-directed RNA polymerase subunit alpha (339 aa).

Positions 1 to 233 (MVREEVAGST…DLFLPFLHAE (233 aa)) are alpha N-terminal domain (alpha-NTD). The segment at 264 to 339 (KKGIPLNCIF…IDLLKNKLSF (76 aa)) is alpha C-terminal domain (alpha-CTD).

It belongs to the RNA polymerase alpha chain family. As to quaternary structure, in plastids the minimal PEP RNA polymerase catalytic core is composed of four subunits: alpha, beta, beta', and beta''. When a (nuclear-encoded) sigma factor is associated with the core the holoenzyme is formed, which can initiate transcription.

The protein resides in the plastid. It localises to the chloroplast. The enzyme catalyses RNA(n) + a ribonucleoside 5'-triphosphate = RNA(n+1) + diphosphate. Its function is as follows. DNA-dependent RNA polymerase catalyzes the transcription of DNA into RNA using the four ribonucleoside triphosphates as substrates. The protein is DNA-directed RNA polymerase subunit alpha of Australopyrum velutinum (Mountain wheat-grass).